Here is a 92-residue protein sequence, read N- to C-terminus: uncharacterized protein (92 aa).

This is an uncharacterized protein from Bacillus subtilis (strain 168).